A 103-amino-acid chain; its full sequence is Large ribosomal subunit protein bL21 (103 aa).

This sequence belongs to the bacterial ribosomal protein bL21 family. In terms of assembly, part of the 50S ribosomal subunit. Contacts protein L20.

In terms of biological role, this protein binds to 23S rRNA in the presence of protein L20. This is Large ribosomal subunit protein bL21 from Serratia proteamaculans (strain 568).